Consider the following 148-residue polypeptide: UPF0756 membrane protein NMA2160 (148 aa).

The next 4 helical transmembrane spans lie at 13–35 (LILLGVVSNNNSITISATILLLM), 50–70 (HGLNLGIILLTIGVLSPLVSG), 80–100 (FLNFKMISAVFIGIFVAWLAG), and 121–141 (VIGVAFMGGIPVGPLIAAGIL).

The protein belongs to the UPF0756 family.

It is found in the cell membrane. In Neisseria meningitidis serogroup A / serotype 4A (strain DSM 15465 / Z2491), this protein is UPF0756 membrane protein NMA2160.